The primary structure comprises 178 residues: Alkyl hydroperoxide reductase AhpD (178 aa).

The active-site Proton donor is Cys131. Cys131 and Cys134 are disulfide-bonded. Catalysis depends on Cys134, which acts as the Cysteine sulfenic acid (-SOH) intermediate.

This sequence belongs to the AhpD family. In terms of assembly, homotrimer.

The catalysed reaction is N(6)-[(R)-dihydrolipoyl]-L-lysyl-[lipoyl-carrier protein] + a hydroperoxide = N(6)-[(R)-lipoyl]-L-lysyl-[lipoyl-carrier protein] + an alcohol + H2O. Functionally, antioxidant protein with alkyl hydroperoxidase activity. Required for the reduction of the AhpC active site cysteine residues and for the regeneration of the AhpC enzyme activity. This chain is Alkyl hydroperoxide reductase AhpD, found in Streptomyces coelicolor (strain ATCC BAA-471 / A3(2) / M145).